Consider the following 1435-residue polypeptide: Protein clueless (1435 aa).

The disordered stretch occupies residues 1–97; sequence MALEMDSKNS…KPEGDGDADA (97 aa). The span at 18–35 shows a compositional bias: low complexity; it reads AAAATTKTNKAKENNNLA. Over residues 38–50 the composition is skewed to polar residues; the sequence is KKNQSQNLVNGNG. Residues 58–67 show a composition bias toward basic residues; that stretch reads TKKKGKKNRN. At serine 266 the chain carries Phosphoserine. A Clu domain is found at 420–662; that stretch reads RAEDAFSSKL…RTFPPDVNFL (243 aa). Basic and acidic residues-rich tracts occupy residues 719–731 and 752–762; these read KKPE…EKKQ and PNEKEKDTPVE. Disordered regions lie at residues 719–762 and 952–998; these read KKPE…TPVE and VSND…SSSS. Positions 959–975 are enriched in basic residues; the sequence is KKRGGNGGKHNKHKSSK. Residues 988 to 998 are compositionally biased toward low complexity; that stretch reads NGGSTTSSSSS. TPR repeat units lie at residues 1096–1129, 1222–1255, and 1257–1290; these read AYNF…LNNV, ALID…NLKY, and GNKA…EKET. Residues 1407–1435 are disordered; the sequence is EVLAPQDNNKEQAATAQQLTNGDKVAVSS. Over residues 1417-1435 the composition is skewed to polar residues; that stretch reads EQAATAQQLTNGDKVAVSS.

The protein belongs to the CLU family.

Its subcellular location is the cytoplasm. Its function is as follows. mRNA-binding protein involved in proper cytoplasmic distribution of mitochondria. The polypeptide is Protein clueless (Drosophila persimilis (Fruit fly)).